Reading from the N-terminus, the 163-residue chain is Nucleotide-binding protein Noca_0564 (163 aa).

It belongs to the YajQ family.

In terms of biological role, nucleotide-binding protein. This chain is Nucleotide-binding protein Noca_0564, found in Nocardioides sp. (strain ATCC BAA-499 / JS614).